A 182-amino-acid polypeptide reads, in one-letter code: Ribulose bisphosphate carboxylase small subunit, chloroplastic (182 aa).

The transit peptide at 1-58 (MASSMISSATVATVSRATPAQATMVAPFTGLKSTAAFPATRKSNNDITSLASNGGRVQ) directs the protein to the chloroplast.

It belongs to the RuBisCO small chain family. As to quaternary structure, heterohexadecamer of 8 large and 8 small subunits.

The protein resides in the plastid. It is found in the chloroplast. Functionally, ruBisCO catalyzes two reactions: the carboxylation of D-ribulose 1,5-bisphosphate, the primary event in carbon dioxide fixation, as well as the oxidative fragmentation of the pentose substrate. Both reactions occur simultaneously and in competition at the same active site. Although the small subunit is not catalytic it is essential for maximal activity. In Fagus crenata (Japanese beech), this protein is Ribulose bisphosphate carboxylase small subunit, chloroplastic.